Consider the following 863-residue polypeptide: ATP-dependent helicase Lhr-Core protein 2 (863 aa).

ATP contacts are provided by Phe-30, Gln-37, Lys-60, Thr-61, Asp-179, Glu-180, Arg-377, and His-380. The Helicase ATP-binding domain maps to 41–234 (VIEIHKGENV…FVFGFNDDGT (194 aa)). The DEAH box motif lies at 179 to 182 (DEVH). The Helicase C-terminal domain occupies 275 to 424 (RLDELIEQHR…RIKIPQNPLD (150 aa)). A WH domain region spans residues 418–512 (IPQNPLDVLV…AIYYMNTGTI (95 aa)). A domain 4 region spans residues 513 to 863 (PDEAKIEVYT…KIMAMIGELE (351 aa)).

It belongs to the Lhr helicase family. Lhr-Core subfamily. Monomer.

The enzyme catalyses ATP + H2O = ADP + phosphate + H(+). Its activity is regulated as follows. Unwinding of dsRNA duplexes is inhibited by AMP-PMP and ATP-gamma-S. Functionally, a DNA:RNA helicase with a significant strand annealing activity, probably involved in DNA repair and RNA transactions. In vitro has a slow helicase activity with a preference for 3'-overhang duplexes; displaces RNA from 3'-overhang DNA:RNA or RNA:RNA duplexes. 3'-tailed double-stranded (ds)DNA is not unwound. The slow helicase activity on RNA duplexes is ATP-independent. Has strand annealing properties in the absence of ATP; forms 3'-overhang DNA:RNA, 3'-overhang dsRNA and 3'-overhang dsDNA duplexes but not 5'-overhang duplexes. A nucleic acid-dependent ATPase; single-stranded (ss)DNA and RNA are equally stimulatory. Binds ssDNA, RNA, dsDNA and dsRNA duplexes. The polypeptide is ATP-dependent helicase Lhr-Core protein 2 (Thermococcus barophilus (strain DSM 11836 / MP)).